A 299-amino-acid polypeptide reads, in one-letter code: B-box zinc finger protein 22 (299 aa).

C5, C8, C28, H33, C57, C60, C80, and H85 together coordinate Zn(2+). The B box-type 1; atypical zinc-finger motif lies at 5-47; the sequence is CNVCEAAEATVLCCADEAALCWACDEKIHAANKLAGKHQRVPL. The B box-type 2; atypical zinc finger occupies 57–99; the sequence is CDICQEASGFFFCLQDRALLCRKCDVAIHTVNPHVSAHQRFLL. Disordered stretches follow at residues 143-181 and 206-299; these read FDHH…GSTT and ENNG…RRRF. Composition is skewed to polar residues over residues 164-181, 251-260, and 277-290; these read VNDQ…GSTT, QIQSPPTASG, and ITSS…SPNQ.

In terms of assembly, interacts with HY5. In terms of processing, ubiquitinated by COP1 in vitro. COP1-mediated degradation of BBX22 by the proteasome occurs in the dark and is important for a precise skotomorphogenesis process and optimization of seedling growth under short days conditions.

The protein resides in the nucleus. In terms of biological role, acts as a positive regulator of seedling photomorphogenesis and light-regulated inhibition of hypocotyl elongation, independently and in concert with HY5 and BBX21. Acts as a positive regulator of de-etiolation and influences chloroplast biogenesis and function through regulation of genes encoding chloroplast proteins. Acts downstream of COP1 and plays an important role in early and long-term adjustment of the shade avoidance syndrome (SAS) responses in natural environments. Regulates the expression of genes responsive to light hormone signals which may contribute to optimal seedling development. This chain is B-box zinc finger protein 22, found in Arabidopsis thaliana (Mouse-ear cress).